The primary structure comprises 199 residues: Potassium-transporting ATPase KdpC subunit (199 aa).

A helical transmembrane segment spans residues 7 to 27; that stretch reads PAIVLLLALTLLTGLAYPLAM. The tract at residues 67-86 is disordered; it reads HGRPSATTAADPQDSSKTVP. Residues 71-84 are compositionally biased toward polar residues; sequence SATTAADPQDSSKT.

It belongs to the KdpC family. The system is composed of three essential subunits: KdpA, KdpB and KdpC.

The protein localises to the cell inner membrane. In terms of biological role, part of the high-affinity ATP-driven potassium transport (or Kdp) system, which catalyzes the hydrolysis of ATP coupled with the electrogenic transport of potassium into the cytoplasm. This subunit acts as a catalytic chaperone that increases the ATP-binding affinity of the ATP-hydrolyzing subunit KdpB by the formation of a transient KdpB/KdpC/ATP ternary complex. The sequence is that of Potassium-transporting ATPase KdpC subunit from Rhodopseudomonas palustris (strain BisB18).